We begin with the raw amino-acid sequence, 614 residues long: Probable Xaa-Pro aminopeptidase P (614 aa).

The Mn(2+) site is built by Asp-411, Asp-422, Glu-520, and Glu-534.

Belongs to the peptidase M24B family. Mn(2+) serves as cofactor.

It carries out the reaction Release of any N-terminal amino acid, including proline, that is linked to proline, even from a dipeptide or tripeptide.. Catalyzes the removal of a penultimate prolyl residue from the N-termini of peptides. This chain is Probable Xaa-Pro aminopeptidase P (AMPP), found in Sordaria macrospora (strain ATCC MYA-333 / DSM 997 / K(L3346) / K-hell).